Here is an 85-residue protein sequence, read N- to C-terminus: Large ribosomal subunit protein bL27 (85 aa).

The interval 1–25 (MAHKKGVGSSRNGRDSNPKMLGVKR) is disordered.

Belongs to the bacterial ribosomal protein bL27 family.

This Roseiflexus castenholzii (strain DSM 13941 / HLO8) protein is Large ribosomal subunit protein bL27.